The sequence spans 2359 residues: MTEGTLAADEVRVPLGASPPAPAAPVRASPASPGAPGREEQGGSGSGVLAPESPGTECGADLGADEEQPVPYPALAATVFFCLGQTTRPRSWCLRLVCNPWFEHISMLVIMLNCVTLGMFRPCEDVECRSERCSILEAFDDFIFAFFAVEMVIKMVALGLFGQKCYLGDTWNRLDFFIVMAGMMEYSLDGHNVSLSAIRTVRVLRPLRAINRVPSMRILVTLLLDTLPMLGNVLLLCFFVFFIFGIVGVQLWAGLLRNRCFLDSAFVRNNNLTFLRPYYQTEEGEENPFICSSRRDNGMQKCSHIPSRRELRVQCTLGWEAYGQPQAEDGGAGRNACINWNQYYNVCRSGEFNPHNGAINFDNIGYAWIAIFQVITLEGWVDIMYYVMDAHSFYNFIYFILLIIMGSFFMINLCLVVIATQFSETKQRENQLMREQRARYLSNDSTLASFSEPGSCYEELLKYVGHIFRKVKRRSLRLYARWQSRWRKKVDPSSTVHGQGPGRRPRRAGRRTASVHHLVYHHHHHHHHHYHFSHGGPRRPSPEPGAGDNRLVRACAPPSPPSPGHGPPDSESVHSIYHADCHVEGPQERARVAHSIATAASLKLASGLGTMNYPTILPSGTVNSKGGTSSRPKGLRGAGAPGAAVHSPLSLGSPRPYEKIQDVVGEQGLGRASSHLSGLSVPCPLPSPQAGTLTCELKSCPYCASALEDPEFEFSGSESGDSDAHGVYEFTQDVRHGDCRDPVQQPHEVGTPGHSNERRRTPLRKASQPGGIGHLWASFSGKLRRIVDSKYFNRGIMAAILVNTLSMGVEYHEQPEELTNALEISNIVFTSMFALEMLLKLLACGPLGYIRNPYNIFDGIVVVISVWEIVGQANGGLSVLRTFRLLRVLKLVRFLPALRRQLVVLMRTMDNVATFCMLLMLFIFIFSILGMHLFGCKFSLKTDSGDTVPDRKNFDSLLWAIVTVFQILTQEDWNVVLYNGMASTSSWAALYFVALMTFGNYVLFNLLVAILVEGFQAEGDATRSDTDEDKTSTQLEGDFDKLRDLRATEMKMYSLAVTPNGHLEGRGSLPPPLITHTAATPMPTPKSSPNLDVAHALLDSRRSSSGSVDPQLGDQKSLASLRSSPCTPWGPNSAGSSRRSSWNSLGRAPSLKRRNQCGERESLLSGEGKGSTDDEAEDSRPSTGTHPGASPGPRATPLRRAESLDHRSTLDLCPPRPAALLPTKFHDCNGQMVALPSEFFLRIDSHKEDAAEFDDDIEDSCCFRLHKVLEPYAPQWCRSRESWALYLFPPQNRLRVSCQKVIAHKMFDHVVLVFIFLNCITIALERPDIDPGSTERAFLSVSNYIFTAIFVVEMMVKVVALGLLWGEHAYLQSSWNVLDGLLVLVSLVDIIVAMASAGGAKILGVLRVLRLLRTLRPLRVISRAPGLKLVVETLISSLRPIGNIVLICCAFFIIFGILGVQLFKGKFYYCEGTDTRNITTKAECHAAHYRWVRRKYNFDNLGQALMSLFVLSSKDGWVNIMYDGLDAVGIDQQPVQNHNPWMLLYFISFLLIVSFFVLNMFVGVVVENFHKCRQHQEAEEARRREEKRLRRLERRRRKAQRRPYYADYSHTRRSIHSLCTSHYLDLFITFIICLNVITMSMEHYNQPKSLDEALKYCNYVFTIVFVFEAALKLVAFGFRRFFKDRWNQLDLAIVLLSIMGIALEEIEMNAALPINPTIIRIMRVLRIARVLKLLKMATGMRALLDTVVQALPQVGNLGLLFMLLFFIYAALGVELFGRLECSEDNPCEGLSRHATFTNFGMAFLTLFRVSTGDNWNGIMKDTLRECTREDKHCLSYLPALSPVYFVTFMLVAQFVLVNVVVAVLMKHLEESNKEAREDAEMDAEIELEMAQGSTAQPPPTAQESQGTQPDTPNLLVVRKVSVSRMLSLPNDSYMFRPVAPAAAPHSHPLQEVEMETYTGPVTSAHSPPLEPRASFQVPSAASSPARVSDPLCALSPRGTPRSLSLSRILCRQEAMHSESLEGKVDDVGGDSIPDYTEPAENMSTSQASTGAPRSPPCSPRPASVRTRKHTFGQRCISSRPPTLGGDEAEAADPADEEVSHITSSAHPWPATEPHSPEASPTASPVKGTMGSGRDPRRFCSVDAQSFLDKPGRPDAQRWSSVELDNGESHLESGEVRGRASELEPALGSRRKKKMSPPCISIEPPTKDEGSSRPPAAEGGNTTLRRRTPSCEAALHRDCPEPTEGPGTGGDPVAKGERWGQASCRAEHLTVPNFAFEPLDMGGPGGDCFLDSDQSVTPEPRVSSLGAIVPLILETELSMPSGDCPEKEQGLYLTVPQTPLKKPGSTPATPAPDDSGDEPV.

The interval 1 to 63 (MTEGTLAADE…PGTECGADLG (63 aa)) is disordered. Residues 1 to 100 (MTEGTLAADE…SWCLRLVCNP (100 aa)) are Cytoplasmic-facing. The span at 24–36 (APVRASPASPGAP) shows a compositional bias: low complexity. The I repeat unit spans residues 87–422 (TRPRSWCLRL…LCLVVIATQF (336 aa)). A helical membrane pass occupies residues 101–119 (WFEHISMLVIMLNCVTLGM). Residues 120-141 (FRPCEDVECRSERCSILEAFDD) lie on the Extracellular side of the membrane. Residue D140 participates in Zn(2+) binding. A helical transmembrane segment spans residues 142–160 (FIFAFFAVEMVIKMVALGL). The Cytoplasmic portion of the chain corresponds to 161–169 (FGQKCYLGD). A helical transmembrane segment spans residues 170 to 184 (TWNRLDFFIVMAGMM). The Extracellular segment spans residues 185-193 (EYSLDGHNV). Zn(2+)-binding residues include D189 and H191. N192 carries an N-linked (GlcNAc...) asparagine glycan. A helical membrane pass occupies residues 194–212 (SLSAIRTVRVLRPLRAINR). Over 213–232 (VPSMRILVTLLLDTLPMLGN) the chain is Cytoplasmic. Residues 233–253 (VLLLCFFVFFIFGIVGVQLWA) form a helical membrane-spanning segment. Residues 254–394 (GLLRNRCFLD…YYVMDAHSFY (141 aa)) lie on the Extracellular side of the membrane. A glycan (N-linked (GlcNAc...) asparagine) is linked at N271. A helical transmembrane segment spans residues 395 to 419 (NFIYFILLIIMGSFFMINLCLVVIA). Residues 420 to 790 (TQFSETKQRE…GKLRRIVDSK (371 aa)) lie on the Cytoplasmic side of the membrane. Disordered regions lie at residues 490–573 (VDPS…SESV), 620–656 (GTVN…SPRP), and 737–769 (GDCR…ASQP). The span at 503–532 (RRPRRAGRRTASVHHLVYHHHHHHHHHYHF) shows a compositional bias: basic residues. Pro residues predominate over residues 557 to 566 (PPSPPSPGHG). The span at 620–631 (GTVNSKGGTSSR) shows a compositional bias: polar residues. The stretch at 776–1015 (WASFSGKLRR…LLVAILVEGF (240 aa)) is one II repeat. The helical transmembrane segment at 791-811 (YFNRGIMAAILVNTLSMGVEY) threads the bilayer. Residues 812–824 (HEQPEELTNALEI) lie on the Extracellular side of the membrane. Residues 825–846 (SNIVFTSMFALEMLLKLLACGP) traverse the membrane as a helical segment. Residues 847 to 852 (LGYIRN) are Cytoplasmic-facing. A helical transmembrane segment spans residues 853-871 (PYNIFDGIVVVISVWEIVG). At 872–879 (QANGGLSV) the chain is on the extracellular side. A helical membrane pass occupies residues 880–903 (LRTFRLLRVLKLVRFLPALRRQLV). Over 904–914 (VLMRTMDNVAT) the chain is Cytoplasmic. The helical transmembrane segment at 915–935 (FCMLLMLFIFIFSILGMHLFG) threads the bilayer. The Extracellular segment spans residues 936–987 (CKFSLKTDSGDTVPDRKNFDSLLWAIVTVFQILTQEDWNVVLYNGMASTSSW). The chain crosses the membrane as a helical span at residues 988-1012 (AALYFVALMTFGNYVLFNLLVAILV). The Cytoplasmic portion of the chain corresponds to 1013–1301 (EGFQAEGDAT…NRLRVSCQKV (289 aa)). The segment at 1061–1197 (GHLEGRGSLP…GASPGPRATP (137 aa)) is disordered. Residues 1117-1126 (SLASLRSSPC) are compositionally biased toward polar residues. Over residues 1130–1147 (GPNSAGSSRRSSWNSLGR) the composition is skewed to low complexity. Residues 1292-1569 (NRLRVSCQKV…MFVGVVVENF (278 aa)) form an III repeat. The chain crosses the membrane as a helical span at residues 1302–1324 (IAHKMFDHVVLVFIFLNCITIAL). Topologically, residues 1325–1342 (ERPDIDPGSTERAFLSVS) are extracellular. The chain crosses the membrane as a helical span at residues 1343 to 1363 (NYIFTAIFVVEMMVKVVALGL). At 1364-1373 (LWGEHAYLQS) the chain is on the cytoplasmic side. A helical membrane pass occupies residues 1374 to 1393 (SWNVLDGLLVLVSLVDIIVA). Over 1394–1407 (MASAGGAKILGVLR) the chain is Extracellular. Residues 1408–1429 (VLRLLRTLRPLRVISRAPGLKL) form a helical membrane-spanning segment. Residues 1430–1439 (VVETLISSLR) are Cytoplasmic-facing. A helical membrane pass occupies residues 1440–1463 (PIGNIVLICCAFFIIFGILGVQLF). The Extracellular portion of the chain corresponds to 1464–1540 (KGKFYYCEGT…DQQPVQNHNP (77 aa)). A glycan (N-linked (GlcNAc...) asparagine) is linked at N1477. The chain crosses the membrane as a helical span at residues 1541-1566 (WMLLYFISFLLIVSFFVLNMFVGVVV). The Cytoplasmic segment spans residues 1567–1621 (ENFHKCRQHQEAEEARRREEKRLRRLERRRRKAQRRPYYADYSHTRRSIHSLCTS). An IV repeat occupies 1607–1868 (DYSHTRRSIH…VVVAVLMKHL (262 aa)). Residues 1622–1642 (HYLDLFITFIICLNVITMSME) form a helical membrane-spanning segment. The Extracellular portion of the chain corresponds to 1643 to 1656 (HYNQPKSLDEALKY). Residues 1657–1678 (CNYVFTIVFVFEAALKLVAFGF) traverse the membrane as a helical segment. At 1679 to 1685 (RRFFKDR) the chain is on the cytoplasmic side. Residues 1686-1704 (WNQLDLAIVLLSIMGIALE) form a helical membrane-spanning segment. Residues 1705–1718 (EIEMNAALPINPTI) lie on the Extracellular side of the membrane. The chain crosses the membrane as a helical span at residues 1719 to 1742 (IRIMRVLRIARVLKLLKMATGMRA). Residues 1743 to 1756 (LLDTVVQALPQVGN) are Cytoplasmic-facing. A helical transmembrane segment spans residues 1757-1777 (LGLLFMLLFFIYAALGVELFG). Residues 1778-1840 (RLECSEDNPC…KHCLSYLPAL (63 aa)) are Extracellular-facing. The chain crosses the membrane as a helical span at residues 1841–1868 (SPVYFVTFMLVAQFVLVNVVVAVLMKHL). At 1869 to 2359 (EESNKEARED…APDDSGDEPV (491 aa)) the chain is on the cytoplasmic side. Polar residues predominate over residues 1891 to 1911 (QGSTAQPPPTAQESQGTQPDT). Disordered stretches follow at residues 1891 to 1913 (QGST…DTPN), 1974 to 2003 (SFQV…PRSL), 2016 to 2258 (HSES…GERW), and 2335 to 2359 (PQTP…DEPV). Residues 2016-2026 (HSESLEGKVDD) are compositionally biased toward basic and acidic residues. Residues 2086 to 2096 (DEAEAADPADE) are compositionally biased toward acidic residues. Positions 2166–2181 (GESHLESGEVRGRASE) are enriched in basic and acidic residues.

This sequence belongs to the calcium channel alpha-1 subunit (TC 1.A.1.11) family. CACNA1H subfamily. As to quaternary structure, interacts (via N-terminal cytoplasmic domain) with STAC. In terms of processing, in response to raising of intracellular calcium, the T-type channels are activated by CaM-kinase II. Expressed in brain.

The protein resides in the cell membrane. The enzyme catalyses Ca(2+)(in) = Ca(2+)(out). In terms of biological role, voltage-sensitive calcium channel that gives rise to T-type calcium currents. T-type calcium channels belong to the 'low-voltage activated (LVA)' group. A particularity of this type of channel is an opening at quite negative potentials, and a voltage-dependent inactivation. T-type channels serve pacemaking functions in both central neurons and cardiac nodal cells and support calcium signaling in secretory cells and vascular smooth muscle. They may also be involved in the modulation of firing patterns of neurons. In the adrenal zona glomerulosa, participates in the signaling pathway leading to aldosterone production in response to either AGT/angiotensin II, or hyperkalemia. The sequence is that of Voltage-dependent T-type calcium channel subunit alpha-1H (Cacna1h) from Rattus norvegicus (Rat).